Reading from the N-terminus, the 130-residue chain is Methylglyoxal synthase (130 aa).

Positions 1–130 (MSTPRIALIA…DLARRLTANA (130 aa)) constitute an MGS-like domain. Residues His11, Lys15, 37 to 40 (TGTT), and 57 to 58 (SG) each bind substrate. Asp63 (proton donor/acceptor) is an active-site residue. His90 lines the substrate pocket.

The protein belongs to the methylglyoxal synthase family.

The enzyme catalyses dihydroxyacetone phosphate = methylglyoxal + phosphate. In terms of biological role, catalyzes the formation of methylglyoxal from dihydroxyacetone phosphate. The polypeptide is Methylglyoxal synthase (Burkholderia mallei (strain NCTC 10247)).